Reading from the N-terminus, the 59-residue chain is Thrombostatin (59 aa).

4 disulfides stabilise this stretch: Cys-3–Cys-22, Cys-17–Cys-37, Cys-39–Cys-51, and Cys-52–Cys-57. The Cell attachment site motif lies at Arg-43–Asp-45.

The protein belongs to the three-finger toxin family. Short-chain subfamily. Antiplatelet toxin sub-subfamily. Expressed by the venom gland.

It localises to the secreted. Functionally, inhibits ADP-induced platelet aggregation and inhibits the binding of purified platelet fibrinogen receptor alpha-IIb/beta-3 (ITGA2B/ITGB3) to immobilized fibrinogen. The chain is Thrombostatin from Dendroaspis angusticeps (Eastern green mamba).